Here is a 424-residue protein sequence, read N- to C-terminus: 3-ketoacyl-CoA thiolase B, peroxisomal (424 aa).

A peroxisome-targeting transit peptide spans 1 to 26; that stretch reads MHRLQVVLGHLAGRPESSSALQAAPC. The PTS2-type peroxisomal targeting signal stretch occupies residues 1-26; it reads MHRLQVVLGHLAGRPESSSALQAAPC. The active-site Acyl-thioester intermediate is Cys-123. N6-acetyllysine occurs at positions 173 and 234. The CoA site is built by Arg-249, Thr-252, and Ser-276. Catalysis depends on Cys-408, which acts as the Proton donor/acceptor.

Belongs to the thiolase-like superfamily. Thiolase family. Homodimer. Interacts (via PTS2-type peroxisomal targeting signal region) with PEX7; leading to its translocation into peroxisomes. As to expression, mainly expressed in liver; weaker levels in kidney, intestine and white adipose tissue.

It localises to the peroxisome. The enzyme catalyses an acyl-CoA + acetyl-CoA = a 3-oxoacyl-CoA + CoA. It carries out the reaction 2 acetyl-CoA = acetoacetyl-CoA + CoA. The catalysed reaction is hexanoyl-CoA + acetyl-CoA = 3-oxooctanoyl-CoA + CoA. It catalyses the reaction tetradecanoyl-CoA + acetyl-CoA = 3-oxohexadecanoyl-CoA + CoA. The enzyme catalyses 3-oxohexadecanedioyl-CoA + CoA = tetradecanedioyl-CoA + acetyl-CoA. It carries out the reaction 3-oxo-(6Z,9Z,12Z,15Z,18Z,21Z)-tetracosahexaenoyl-CoA + CoA = (4Z,7Z,10Z,13Z,16Z,19Z)-docosahexaenoyl-CoA + acetyl-CoA. Its pathway is lipid metabolism; peroxisomal fatty acid beta-oxidation. Responsible for the thiolytic cleavage of straight chain 3-keto fatty acyl-CoAs (3-oxoacyl-CoAs). Plays an important role in fatty acid peroxisomal beta-oxidation. Catalyzes the cleavage of short, medium, long, and very long straight chain 3-oxoacyl-CoAs. In Mus musculus (Mouse), this protein is 3-ketoacyl-CoA thiolase B, peroxisomal.